The following is a 342-amino-acid chain: UDP-N-acetylglucosamine--N-acetylmuramyl-(pentapeptide) pyrophosphoryl-undecaprenol N-acetylglucosamine transferase (342 aa).

UDP-N-acetyl-alpha-D-glucosamine is bound by residues Thr10–Gly12, Asn124, Ser177, and Gln275.

This sequence belongs to the glycosyltransferase 28 family. MurG subfamily.

Its subcellular location is the cell inner membrane. It carries out the reaction di-trans,octa-cis-undecaprenyl diphospho-N-acetyl-alpha-D-muramoyl-L-alanyl-D-glutamyl-meso-2,6-diaminopimeloyl-D-alanyl-D-alanine + UDP-N-acetyl-alpha-D-glucosamine = di-trans,octa-cis-undecaprenyl diphospho-[N-acetyl-alpha-D-glucosaminyl-(1-&gt;4)]-N-acetyl-alpha-D-muramoyl-L-alanyl-D-glutamyl-meso-2,6-diaminopimeloyl-D-alanyl-D-alanine + UDP + H(+). It participates in cell wall biogenesis; peptidoglycan biosynthesis. In terms of biological role, cell wall formation. Catalyzes the transfer of a GlcNAc subunit on undecaprenyl-pyrophosphoryl-MurNAc-pentapeptide (lipid intermediate I) to form undecaprenyl-pyrophosphoryl-MurNAc-(pentapeptide)GlcNAc (lipid intermediate II). In Campylobacter jejuni (strain RM1221), this protein is UDP-N-acetylglucosamine--N-acetylmuramyl-(pentapeptide) pyrophosphoryl-undecaprenol N-acetylglucosamine transferase.